The chain runs to 517 residues: Ascochitine biosynthesis cluster MFS transporter (517 aa).

The span at 1–12 shows a compositional bias: basic and acidic residues; it reads MSPDSRDPEAQR. Positions 1-45 are disordered; the sequence is MSPDSRDPEAQRDVGLTKNTSSVNIPLESVKTDKTSNASPIMGPG. Asparagine 19 is a glycosylation site (N-linked (GlcNAc...) asparagine). 12 helical membrane passes run 75 to 95, 111 to 131, 141 to 161, 172 to 192, 204 to 224, 232 to 252, 308 to 328, 347 to 367, 390 to 410, 421 to 441, 457 to 475, and 485 to 505; these read WVIT…STIF, VVMT…PLIW, LTPF…VGVA, FFIG…LADI, VYAA…GFVV, WTAW…LVFV, ILLL…LFFV, ALPL…ILFV, LMMV…WTSS, AGFP…SFLI, LIRS…PMYH, and LLGF…YYGP.

The protein belongs to the major facilitator superfamily. CAR1 family.

It is found in the membrane. Its function is as follows. MFS transporter; part of the gene cluster that mediates the biosynthesis the mycotoxin ascochitine, an o-quinone methide that plays a possible protective role against other microbial competitors in nature and is considered to be important for pathogenicity of legume-associated Didymella species. This chain is Ascochitine biosynthesis cluster MFS transporter, found in Didymella fabae (Leaf and pod spot disease fungus).